Consider the following 222-residue polypeptide: Riboflavin kinase (222 aa).

Residues 1–94 (METIDAEDAA…AKIFDVKDEQ (94 aa)) are H-T-H motif-like. The segment at 95–222 (YVLTGTVMSG…ENSEVVVVIG (128 aa)) is riboflavin kinase. 104-109 (GVGEGR) contacts CDP. 2 residues coordinate Mg(2+): T133 and N135. FMN-binding residues include T190 and E198. Residue 203–206 (TQLR) coordinates CDP.

It belongs to the archaeal riboflavin kinase family. The cofactor is Mg(2+).

It catalyses the reaction riboflavin + CTP = CDP + FMN + H(+). It participates in cofactor biosynthesis; FMN biosynthesis; FMN from riboflavin (CTP route): step 1/1. Functionally, catalyzes the CTP-dependent phosphorylation of riboflavin (vitamin B2) to form flavin mononucleotide (FMN). The chain is Riboflavin kinase (ribK) from Methanocorpusculum labreanum (strain ATCC 43576 / DSM 4855 / Z).